The primary structure comprises 1783 residues: 6-methylsalicylic acid synthase (1783 aa).

Residues 1–31 show a composition bias toward polar residues; that stretch reads MITSTSSTEVLTPANGSDDSKGTTTPATSSG. The segment at 1–40 is disordered; the sequence is MITSTSSTEVLTPANGSDDSKGTTTPATSSGDPEMHDDLL. A Ketosynthase family 3 (KS3) domain is found at 45 to 474; sequence HDDVAIIGMA…GTVSHAIIEA (430 aa). Active-site for beta-ketoacyl synthase activity residues include Cys217, His352, and His394. The tract at residues 587–884 is malonyl-CoA:ACP transacylase (MAT) domain; the sequence is WVFSGHGAQW…TPTMVRKQPA (298 aa). The For acyl/malonyl transferase activity role is filled by Ser673. Positions 942 to 1215 are product template (PT) domain; it reads THKPAANDLL…AFAGVEGESL (274 aa). The tract at residues 948–1064 is N-terminal hotdog fold; it reads NDLLGTRTAL…ATVGADATPS (117 aa). Residues 948 to 1216 enclose the PKS/mFAS DH domain; the sequence is NDLLGTRTAL…FAGVEGESLS (269 aa). Catalysis depends on His980, which acts as the Proton acceptor; for dehydratase activity. The interval 1078-1216 is C-terminal hotdog fold; that stretch reads PQKLSDSFSI…FAGVEGESLS (139 aa). The Proton donor; for dehydratase activity role is filled by Asp1130. Residues 1707–1781 enclose the Carrier domain; it reads EYVLVVVKKC…HLVEYFCQVL (75 aa). Position 1741 is an O-(pantetheine 4'-phosphoryl)serine (Ser1741).

The catalysed reaction is 3 malonyl-CoA + acetyl-CoA + NADPH + 3 H(+) = 6-methylsalicylate + 3 CO2 + NADP(+) + 4 CoA + H2O. It functions in the pathway secondary metabolite biosynthesis; terpenoid biosynthesis. In terms of biological role, non-reducing polyketide synthase; part of the gene cluster that mediates the biosynthesis of macrophorins, isoprenoid epoxycyclohexenones containing cyclized drimane moieties. The first step of the pathway is the synthesis of 6-methylsalicylic acid (6-MSA) by the polyketide synthase macA. 6-MSA is then converted to m-cresol by the decarboxylase macB. The cytochrome P450 monooxygenase macC then catalyzes the oxidation of m-cresol to toluquinol. Epoxidation of toluquinol is then performed by the short chain dehydrogenase macD, with the help of macE, and a further prenylation by macG leads to 7-deacetoxyyanuthone A. The next step is the hydroxylation of C-22 of 7-deacetoxyyanuthone A by the cytochrome P450 monooxygenase macH to yield 22-deacetylyanuthone A. O-Mevalon transferase macI then attaches mevalon to the hydroxyl group of 22-deacetylyanuthone A to produce yanuthone E. The terpene cyclase macJ catalyzes the cyclization of 22-deacetylyanuthone A to macrophorin A. MacJ is also able to catalyze cyclization of yanuthone E and 7-deacetoxyyanuthone A to their corresponding macrophorins. The macJ products can be further modified by macH and macJ, as well as by the FAD-dependent monooxygenase macF, to produce additional macrophorins, including 4'-oxomacrophorin A, 4'-oxomacrophorin D and 4'-oxomacrophorin E. This is 6-methylsalicylic acid synthase from Penicillium terrestre.